Consider the following 424-residue polypeptide: Putative chloroquine resistance transporter (424 aa).

The Cytoplasmic segment spans residues 1–57 (MKILKKKKKGNQQIVPDERYRELDSHAPNENEIADEAPMSRKILYYLKLVYHEIREN). Residues 58 to 78 (ITIYLLIILYLCVCVMNKIMA) traverse the membrane as a helical segment. The Vacuolar segment spans residues 79 to 89 (KRTLKKIGNYS). Residue Asn87 is glycosylated (N-linked (GlcNAc...) asparagine). The chain crosses the membrane as a helical span at residues 90 to 110 (FVTSETHNTICMVVFFSLYFI). Residues 111 to 124 (FGRRVTSAKERHQN) are Cytoplasmic-facing. The chain crosses the membrane as a helical span at residues 125–145 (FGLQFLLISLLDACSVIIAFI). Residues 146-153 (GLTRTTGN) lie on the Vacuolar side of the membrane. The chain crosses the membrane as a helical span at residues 154–174 (IQSFVMQLSIPINMFFCFLIL). Topologically, residues 175-179 (RYRYH) are cytoplasmic. The helical transmembrane segment at 180 to 200 (LFNYVGASIIVLTIAIVEFIL) threads the bilayer. Residues 201-208 (SFETQEEN) are Vacuolar-facing. A helical transmembrane segment spans residues 209-229 (SIVFNLVLIASLIPMSFSNMT). Topologically, residues 230–246 (REIVFKKYKINILRLNA) are cytoplasmic. The chain crosses the membrane as a helical span at residues 247–267 (VVSFFQIFTSCLMLPMYTLPF). At 268 to 316 (LKQINLPFSEIGTNIKNGFRCLILGQNTIVENCGLGMAKMCDDCEGAWK) the chain is on the vacuolar side. 2 cysteine pairs are disulfide-bonded: Cys288-Cys311 and Cys300-Cys308. A helical transmembrane segment spans residues 317 to 337 (TFLAYSFFNICDNLITSFIID). At 338–345 (KFSTMTYT) the chain is on the cytoplasmic side. The helical transmembrane segment at 346-366 (IVSCIQGPAIAIAYYFKFLAG) threads the bilayer. Residues 367–376 (DAVMKPRVLD) lie on the Vacuolar side of the membrane. Residues 377–397 (FVTLFGYLFGSIIYRVGNIIL) form a helical membrane-spanning segment. Residues 398-424 (EKKKMMEAGNDDDSEGELTNAESIITQ) lie on the Cytoplasmic side of the membrane.

It belongs to the CRT-like transporter family.

The protein resides in the vacuole membrane. Its function is as follows. Nutrient transporter. Involved in maintaining the osmotic homeostasis of the digestive vacuole. The chain is Putative chloroquine resistance transporter from Plasmodium knowlesi.